The sequence spans 522 residues: Cytochrome P450 9c1 (522 aa).

Cysteine 464 provides a ligand contact to heme.

This sequence belongs to the cytochrome P450 family. The cofactor is heme.

The protein localises to the endoplasmic reticulum membrane. The protein resides in the microsome membrane. May be involved in the metabolism of insect hormones and in the breakdown of synthetic insecticides. In Drosophila melanogaster (Fruit fly), this protein is Cytochrome P450 9c1 (Cyp9c1).